The sequence spans 558 residues: Putative ABC transporter ATP-binding protein gbs1680 (558 aa).

ABC transporter domains lie at 5–246 and 295–527; these read IEWK…GIRE and LSVQ…THLK. ATP contacts are provided by residues 39–46 and 328–335; these read GPSGSGKS and GKNGAGKS.

This sequence belongs to the ABC transporter superfamily.

It localises to the cell membrane. In terms of biological role, probably part of an ABC transporter complex. Responsible for energy coupling to the transport system. This Streptococcus agalactiae serotype III (strain NEM316) protein is Putative ABC transporter ATP-binding protein gbs1680.